The following is a 374-amino-acid chain: uncharacterized protein (374 aa).

Residues 197–223 (GTTTTTNNNNNNNNNNNNNNNNGTNIT) are disordered. The span at 198-223 (TTTTTNNNNNNNNNNNNNNNNGTNIT) shows a compositional bias: low complexity. A coiled-coil region spans residues 302-342 (DEVSDCNDINTNLKKKRKQQEQLQIEKEKKLLTIQQEQTKI).

This is an uncharacterized protein from Dictyostelium discoideum (Social amoeba).